A 112-amino-acid polypeptide reads, in one-letter code: Large ribosomal subunit protein mL53 (112 aa).

It belongs to the mitochondrion-specific ribosomal protein mL53 family. As to quaternary structure, component of the mitochondrial ribosome large subunit (39S) which comprises a 16S rRNA and about 50 distinct proteins.

The protein localises to the mitochondrion. The chain is Large ribosomal subunit protein mL53 (MRPL53) from Bos taurus (Bovine).